The sequence spans 1934 residues: Tudor domain-containing protein 15 (1934 aa).

Tudor domains are found at residues 59 to 117 (NVEI…LFEL), 289 to 347 (CDNF…FILV), 531 to 589 (KPEP…FCEL), 799 to 856 (PYEI…FLLL), 1011 to 1070 (DSNK…FPEL), and 1342 to 1401 (KPLV…FLTV). A disordered region spans residues 1490–1510 (VRPGDNEMKKGKSNESEGSMN). Basic and acidic residues predominate over residues 1491–1504 (RPGDNEMKKGKSNE). 2 Tudor domains span residues 1574–1633 (SIEK…IRNI) and 1780–1838 (FIIP…PEEL).

In Homo sapiens (Human), this protein is Tudor domain-containing protein 15 (TDRD15).